The chain runs to 399 residues: Dual specificity mitogen-activated protein kinase kinase 4 (399 aa).

A disordered region spans residues 1 to 40 (MAAPSPSGGGGSGGGSGSGTPGPVGSPAPGHPAVSSMQGK). Ala2 carries the post-translational modification N-acetylalanine. Positions 7–22 (SGGGGSGGGSGSGTPG) are enriched in gly residues. A d domain region spans residues 37–52 (MQGKRKALKLNFANPP). An Asymmetric dimethylarginine; alternate modification is found at Arg58. Arg58 carries the omega-N-methylarginine; alternate modification. Ser90 is modified (phosphoserine). The region spanning 102–367 (LKDLGEIGRG…YKELLKHPFI (266 aa)) is the Protein kinase domain. ATP-binding positions include 108–116 (IGRGAYGSV) and Lys131. The active-site Proton acceptor is the Asp229. At Ser257 the chain carries Phosphoserine; by MAP3K. At Thr261 the chain carries Phosphothreonine; by MAP3K. Positions 364–387 (HPFILMYEERAVEVACYVCKILDQ) are DVD domain.

Belongs to the protein kinase superfamily. STE Ser/Thr protein kinase family. MAP kinase kinase subfamily. In terms of assembly, interacts with SPAG9. Interacts (via its D domain) with its substrates MAPK8/JNK1, MAPK9/JNK2, MAPK10/JNK3, MAPK11 and MAPK14. Interacts (via its DVD domain) with MAP3Ks activators like MAP3K1/MEKK1 and MAP3K11/MLK3. Interacts with ARRB1, ARRB2 and MAPK8IP3/JIP3. In terms of processing, activated by phosphorylation on Ser-257 and Thr-261 by MAP kinase kinase kinases (MAP3Ks). Abundant expression is seen in the skeletal muscle. It is also widely expressed in other tissues.

It is found in the cytoplasm. The protein localises to the nucleus. It catalyses the reaction L-seryl-[protein] + ATP = O-phospho-L-seryl-[protein] + ADP + H(+). It carries out the reaction L-threonyl-[protein] + ATP = O-phospho-L-threonyl-[protein] + ADP + H(+). The catalysed reaction is L-tyrosyl-[protein] + ATP = O-phospho-L-tyrosyl-[protein] + ADP + H(+). Activated in response to a variety of cellular stresses, including UV and gamma-irradiation, heat shock, hyperosmolarity, T-cell receptor stimulation, peroxide and inflammatory cytokines. Also activated by developmental cues. MAP2K4/MKK4 is activated by the majority of MKKKs, such as MAP3K5/ASK1, MAP3K1/MEKK1, MAP3K7/TAK1, MAP3K10/MLK2, MAP3K11/MLK3, MAP3K12/DLK and MAP3K13/LZK. Dual specificity protein kinase which acts as an essential component of the MAP kinase signal transduction pathway. Essential component of the stress-activated protein kinase/c-Jun N-terminal kinase (SAP/JNK) signaling pathway. With MAP2K7/MKK7, is the one of the only known kinase to directly activate the stress-activated protein kinase/c-Jun N-terminal kinases MAPK8/JNK1, MAPK9/JNK2 and MAPK10/JNK3. MAP2K4/MKK4 and MAP2K7/MKK7 both activate the JNKs by phosphorylation, but they differ in their preference for the phosphorylation site in the Thr-Pro-Tyr motif. MAP2K4 shows preference for phosphorylation of the Tyr residue and MAP2K7/MKK7 for the Thr residue. The phosphorylation of the Thr residue by MAP2K7/MKK7 seems to be the prerequisite for JNK activation at least in response to pro-inflammatory cytokines, while other stimuli activate both MAP2K4/MKK4 and MAP2K7/MKK7 which synergistically phosphorylate JNKs. MAP2K4 is required for maintaining peripheral lymphoid homeostasis. The MKK/JNK signaling pathway is also involved in mitochondrial death signaling pathway, including the release cytochrome c, leading to apoptosis. Whereas MAP2K7/MKK7 exclusively activates JNKs, MAP2K4/MKK4 additionally activates the p38 MAPKs MAPK11, MAPK12, MAPK13 and MAPK14. This Homo sapiens (Human) protein is Dual specificity mitogen-activated protein kinase kinase 4 (MAP2K4).